Here is a 324-residue protein sequence, read N- to C-terminus: Signal peptidase I (324 aa).

Over 1 to 3 (MAN) the chain is Periplasmic. A helical transmembrane segment spans residues 4–22 (MFALILVIATLVTGILWCV). At 23–58 (DKFVFAPKRRARQAAAQTASGDALDNATLNKVAPKP) the chain is on the cytoplasmic side. The helical transmembrane segment at 59–77 (GWLETGASVFPVLAIVLIV) threads the bilayer. Over 78–324 (RSFLYEPFQI…VRLSRIGGIH (247 aa)) the chain is Periplasmic. Catalysis depends on residues serine 91 and lysine 146.

It belongs to the peptidase S26 family.

It localises to the cell inner membrane. The enzyme catalyses Cleavage of hydrophobic, N-terminal signal or leader sequences from secreted and periplasmic proteins.. The protein is Signal peptidase I (lepB) of Salmonella typhi.